A 439-amino-acid polypeptide reads, in one-letter code: Glutamate--tRNA ligase 2 (439 aa).

Positions 6 to 16 match the 'HIGH' region motif; the sequence is PSPTGDMHIGN. Positions 232–236 match the 'KMSKS' region motif; the sequence is KMSKR. Lys235 is an ATP binding site.

The protein belongs to the class-I aminoacyl-tRNA synthetase family. Glutamate--tRNA ligase type 1 subfamily. In terms of assembly, monomer.

Its subcellular location is the cytoplasm. The catalysed reaction is tRNA(Glu) + L-glutamate + ATP = L-glutamyl-tRNA(Glu) + AMP + diphosphate. Its function is as follows. Catalyzes the attachment of glutamate to tRNA(Glu) in a two-step reaction: glutamate is first activated by ATP to form Glu-AMP and then transferred to the acceptor end of tRNA(Glu). The protein is Glutamate--tRNA ligase 2 of Helicobacter pylori (strain Shi470).